The chain runs to 117 residues: Ribosome-binding factor A (117 aa).

The protein belongs to the RbfA family. Monomer. Binds 30S ribosomal subunits, but not 50S ribosomal subunits or 70S ribosomes.

The protein localises to the cytoplasm. Its function is as follows. One of several proteins that assist in the late maturation steps of the functional core of the 30S ribosomal subunit. Associates with free 30S ribosomal subunits (but not with 30S subunits that are part of 70S ribosomes or polysomes). Required for efficient processing of 16S rRNA. May interact with the 5'-terminal helix region of 16S rRNA. In Nitrosomonas europaea (strain ATCC 19718 / CIP 103999 / KCTC 2705 / NBRC 14298), this protein is Ribosome-binding factor A.